Consider the following 570-residue polypeptide: Dihydroxy-acid dehydratase (570 aa).

Cysteine 61 provides a ligand contact to [2Fe-2S] cluster. Aspartate 94 contributes to the Mg(2+) binding site. Position 135 (cysteine 135) interacts with [2Fe-2S] cluster. Residues aspartate 136 and lysine 137 each contribute to the Mg(2+) site. Position 137 is an N6-carboxylysine (lysine 137). Cysteine 207 contributes to the [2Fe-2S] cluster binding site. Position 459 (glutamate 459) interacts with Mg(2+). Serine 485 (proton acceptor) is an active-site residue.

Belongs to the IlvD/Edd family. As to quaternary structure, homodimer. It depends on [2Fe-2S] cluster as a cofactor. Mg(2+) is required as a cofactor.

It catalyses the reaction (2R)-2,3-dihydroxy-3-methylbutanoate = 3-methyl-2-oxobutanoate + H2O. The catalysed reaction is (2R,3R)-2,3-dihydroxy-3-methylpentanoate = (S)-3-methyl-2-oxopentanoate + H2O. It participates in amino-acid biosynthesis; L-isoleucine biosynthesis; L-isoleucine from 2-oxobutanoate: step 3/4. It functions in the pathway amino-acid biosynthesis; L-valine biosynthesis; L-valine from pyruvate: step 3/4. In terms of biological role, functions in the biosynthesis of branched-chain amino acids. Catalyzes the dehydration of (2R,3R)-2,3-dihydroxy-3-methylpentanoate (2,3-dihydroxy-3-methylvalerate) into 2-oxo-3-methylpentanoate (2-oxo-3-methylvalerate) and of (2R)-2,3-dihydroxy-3-methylbutanoate (2,3-dihydroxyisovalerate) into 2-oxo-3-methylbutanoate (2-oxoisovalerate), the penultimate precursor to L-isoleucine and L-valine, respectively. The protein is Dihydroxy-acid dehydratase of Lactococcus lactis subsp. lactis (strain IL1403) (Streptococcus lactis).